We begin with the raw amino-acid sequence, 254 residues long: PF03932 family protein CutC (254 aa).

The protein belongs to the CutC family.

Its subcellular location is the cytoplasm. This chain is PF03932 family protein CutC, found in Yersinia pestis bv. Antiqua (strain Antiqua).